A 598-amino-acid polypeptide reads, in one-letter code: 2-succinyl-5-enolpyruvyl-6-hydroxy-3-cyclohexene-1-carboxylate synthase (598 aa).

It belongs to the TPP enzyme family. MenD subfamily. As to quaternary structure, homodimer. Mg(2+) serves as cofactor. The cofactor is Mn(2+). It depends on thiamine diphosphate as a cofactor.

The enzyme catalyses isochorismate + 2-oxoglutarate + H(+) = 5-enolpyruvoyl-6-hydroxy-2-succinyl-cyclohex-3-ene-1-carboxylate + CO2. The protein operates within quinol/quinone metabolism; 1,4-dihydroxy-2-naphthoate biosynthesis; 1,4-dihydroxy-2-naphthoate from chorismate: step 2/7. It participates in cofactor biosynthesis; phylloquinone biosynthesis. Its function is as follows. Catalyzes the thiamine diphosphate-dependent decarboxylation of 2-oxoglutarate and the subsequent addition of the resulting succinic semialdehyde-thiamine pyrophosphate anion to isochorismate to yield 2-succinyl-5-enolpyruvyl-6-hydroxy-3-cyclohexene-1-carboxylate (SEPHCHC). This chain is 2-succinyl-5-enolpyruvyl-6-hydroxy-3-cyclohexene-1-carboxylate synthase, found in Prochlorococcus marinus (strain NATL2A).